Here is a 1497-residue protein sequence, read N- to C-terminus: Collagen alpha-1(XVII) chain (1497 aa).

Disordered stretches follow at residues 1 to 154 and 167 to 186; these read MDVT…PSTR and GSRS…LPIP. Over 1–467 the chain is Cytoplasmic; the sequence is MDVTKKNKRD…CGSCCSWWKW (467 aa). The segment at 1–566 is nonhelical region (NC16); that stretch reads MDVTKKNKRD…MMEQENGNLR (566 aa). Residues 9 to 19 show a composition bias toward basic and acidic residues; sequence RDGTEVTERIV. Composition is skewed to polar residues over residues 57–96 and 169–183; these read LTHG…SPGS and RSAS…SNTL. The interval 145 to 230 is necessary for interaction with DST and for the recruitment of DST to hemidesmosome; it reads RLQSASPSTR…WSSTLPAGSS (86 aa). The helical; Signal-anchor for type II membrane protein transmembrane segment at 468 to 488 threads the bilayer; the sequence is LLGLLLTWLLLLGLLFGLIAL. Residues 489–1497 lie on the Extracellular side of the membrane; it reads AEEVRKLKAR…RRRRSIAVKP (1009 aa). At serine 544 the chain carries Phosphoserine; by CK2. Disordered stretches follow at residues 562-1011, 1209-1234, and 1261-1316; these read NGNL…SSSG, GLSF…VSGA, and SFIV…TGGG. The triple-helical region stretch occupies residues 567 to 1482; it reads GSPGPKGDMG…KGEKGDKGDQ (916 aa). Residues 590-602 show a composition bias toward pro residues; the sequence is PGIPGPLGHPGPQ. Low complexity-rich tracts occupy residues 604–635, 661–673, 735–748, and 774–796; these read PKGQ…RGEA, PGSV…SGSP, EPGA…AGPD, and DPGK…PGRP. 3 stretches are compositionally biased toward pro residues: residues 820–841, 858–881, and 907–916; these read PGPP…PGPA, PPGP…PRGP, and PPGPPGPPGP. Low complexity-rich tracts occupy residues 936–946 and 968–987; these read GFSTSGSSSFG and PGVP…GSSS. 3 stretches are compositionally biased toward pro residues: residues 994–1004, 1214–1228, and 1266–1275; these read PPGPPGPPGPP, PGPP…PRGP, and PPGPPGPQGP. A compositionally biased stretch (low complexity) spans 1289-1312; sequence SRGSSSSSHSSSVRRGSSYSSSMS. An N-linked (GlcNAc...) asparagine glycan is attached at asparagine 1421. The disordered stretch occupies residues 1434–1497; it reads GAIQGPPGQK…RRRRSIAVKP (64 aa). Positions 1458–1469 are enriched in pro residues; it reads AGPPGHPGPPGP. Residues 1472–1481 show a composition bias toward basic and acidic residues; that stretch reads HKGEKGDKGD. Residues 1483–1497 form a nonhelical region (NC1) region; it reads VYAGRRRRRSIAVKP. Positions 1486–1497 are enriched in basic residues; sequence GRRRRRSIAVKP.

In terms of assembly, homotrimers of alpha 1(XVII)chains. Interacts (via cytoplasmic region) with ITGB4 (via cytoplasmic region). Interacts (via cytoplasmic region) with DST isoform 3 (via N-terminus). Interacts (via N-terminus) with PLEC. Interacts (via cytoplasmic region) with DSP. In terms of processing, the intracellular/endo domain is disulfide-linked. Prolines at the third position of the tripeptide repeating unit (G-X-Y) are hydroxylated in some or all of the chains. Post-translationally, the ectodomain is shedded from the surface of keratinocytes resulting in a 120-kDa soluble form, also named as 120 kDa linear IgA disease antigen. The shedding is mediated by membrane-bound metalloproteases. This cleavage is inhibited by phosphorylation at Ser-544. In terms of tissue distribution, detected in skin. In the cornea, it is detected in the epithelial basement membrane, the epithelial cells, and at a lower level in stromal cells (at protein level). Stratified squamous epithelia. Found in hemidesmosomes. Expressed in cornea, oral mucosa, esophagus, intestine, kidney collecting ducts, ureter, bladder, urethra and thymus but is absent in lung, blood vessels, skeletal muscle and nerves.

The protein localises to the cell junction. It is found in the hemidesmosome. Its subcellular location is the membrane. It localises to the secreted. The protein resides in the extracellular space. The protein localises to the extracellular matrix. It is found in the basement membrane. May play a role in the integrity of hemidesmosome and the attachment of basal keratinocytes to the underlying basement membrane. Its function is as follows. The 120 kDa linear IgA disease antigen is an anchoring filament component involved in dermal-epidermal cohesion. Is the target of linear IgA bullous dermatosis autoantibodies. In Homo sapiens (Human), this protein is Collagen alpha-1(XVII) chain (COL17A1).